The primary structure comprises 457 residues: Bifunctional protein GlmU (457 aa).

The tract at residues 1–229 (MYNCAIILAA…YEEIMGVNSR (229 aa)) is pyrophosphorylase. UDP-N-acetyl-alpha-D-glucosamine contacts are provided by residues 8 to 11 (LAAG), lysine 22, glutamine 73, and 78 to 79 (GT). Position 103 (aspartate 103) interacts with Mg(2+). Positions 140, 155, 170, and 227 each coordinate UDP-N-acetyl-alpha-D-glucosamine. Asparagine 227 serves as a coordination point for Mg(2+). The tract at residues 230–250 (VQLSEAEIVMRKRINHKHMVN) is linker. The segment at 251–457 (GVTFIDCEST…WLDKKGLLKK (207 aa)) is N-acetyltransferase. Positions 332 and 350 each coordinate UDP-N-acetyl-alpha-D-glucosamine. Histidine 362 functions as the Proton acceptor in the catalytic mechanism. UDP-N-acetyl-alpha-D-glucosamine-binding residues include tyrosine 365 and asparagine 376. Residues 385-386 (NY), alanine 422, and arginine 439 contribute to the acetyl-CoA site.

In the N-terminal section; belongs to the N-acetylglucosamine-1-phosphate uridyltransferase family. The protein in the C-terminal section; belongs to the transferase hexapeptide repeat family. In terms of assembly, homotrimer. Mg(2+) is required as a cofactor.

It localises to the cytoplasm. The catalysed reaction is alpha-D-glucosamine 1-phosphate + acetyl-CoA = N-acetyl-alpha-D-glucosamine 1-phosphate + CoA + H(+). It catalyses the reaction N-acetyl-alpha-D-glucosamine 1-phosphate + UTP + H(+) = UDP-N-acetyl-alpha-D-glucosamine + diphosphate. The protein operates within nucleotide-sugar biosynthesis; UDP-N-acetyl-alpha-D-glucosamine biosynthesis; N-acetyl-alpha-D-glucosamine 1-phosphate from alpha-D-glucosamine 6-phosphate (route II): step 2/2. It participates in nucleotide-sugar biosynthesis; UDP-N-acetyl-alpha-D-glucosamine biosynthesis; UDP-N-acetyl-alpha-D-glucosamine from N-acetyl-alpha-D-glucosamine 1-phosphate: step 1/1. Its pathway is bacterial outer membrane biogenesis; LPS lipid A biosynthesis. Functionally, catalyzes the last two sequential reactions in the de novo biosynthetic pathway for UDP-N-acetylglucosamine (UDP-GlcNAc). The C-terminal domain catalyzes the transfer of acetyl group from acetyl coenzyme A to glucosamine-1-phosphate (GlcN-1-P) to produce N-acetylglucosamine-1-phosphate (GlcNAc-1-P), which is converted into UDP-GlcNAc by the transfer of uridine 5-monophosphate (from uridine 5-triphosphate), a reaction catalyzed by the N-terminal domain. The polypeptide is Bifunctional protein GlmU (Clostridium botulinum (strain Kyoto / Type A2)).